Consider the following 205-residue polypeptide: Cerebellin-3 (205 aa).

An N-terminal signal peptide occupies residues methionine 1–alanine 32. The C1q domain occupies alanine 67 to leucine 205. An N-linked (GlcNAc...) asparagine glycan is attached at asparagine 90.

In terms of assembly, heterohexamer; disulfide-linked heterotrimers. Interacts with CBLN1. May also form oligomers with CBLN2 and CBLN4.

It is found in the endoplasmic reticulum. Its subcellular location is the golgi apparatus. The protein localises to the cis-Golgi network. The protein resides in the secreted. It localises to the synapse. Its function is as follows. May be involved in synaptic functions in the CNS. This is Cerebellin-3 (CBLN3) from Bos taurus (Bovine).